The chain runs to 1370 residues: MAYSYTERKRIRKSFGSRDSVLEVPYLLQMQKDAYTAFLQSDVAPKKRTIEGLQAAFNSAFPIVSHNGFVEMKFVEYNLAKPAFDVRECQTRGLTFASAVRAKVQLIIYDRESSTSQSKVVKEVKEQEVYMGEVPLMTEKGSFIINGTERVIVSQLHRSPGVFFEHDKGKTHSSGKLLFSARIIPYRGSWLDFEFDPKDLLFFRVDRRRKMPVSILLKAIGLTPESILANFFVNDNFRLMDSGAQMEFVSERLRGEVARFDITDKSGKVVVAKDKRVTARHTRELEQSGTKFISVPEDFLIGRVVAKNIVDPDTGEIIAKANEELTESLLKKLRSAGIQDLQCIYTNELDQGAYISQTLRTDETVDEFAARVAIYRMMRPGEPPTEDAVQALFQRLFYNPDTYDLSRVGRMKFNAKVGRDGATGPMVLSNEDILAVVKILVDLRNGKGEVDDIDHLGNRRVRCVGELAENQYRTGLARIEKAVKERLGQAEQEPLMPHDLINSKPISAALKEFFGASQLSQFMDQTNPLAEITHKRRVSALGPGGLTRERAGFEVRDVHVTHYGRVCPIETPEGPNIGLINSLALYARLNEYGFIETPYRRVADGKVTMEIDYLSAIEEGKYIIAQANAELDAEGRLIGDLVSAREKGDSTLVSAERVQYMDVSPAQIVSVAASLIPFLEHDDANRALMGANMSRQAVPVLRPEKPMVGTGIERVAAVDSGTVVTATRGGIVDYVDATRIVVRVNDAEAVAGEVGVDIYNLIKYQRSNQNTNIHQRPIVKRGDKLAKGDVVADGASTDLGEIAIGQNMLIAFMPWNGYNFEDSILINERVVAEDRYTSIHIEELVVMARDTKLGAEEITRDIPNLSEQQLNRLDESGIIYVGAEVQPGDVLVGKVTPKGETTLTPEEKLLRAIFGEKASDVKDTSLRVDQGSQGTVIDVQVFTREGIQRDKRAQQIIDDELKRYRLDLNDQLRIVEADAFDRIEKLLNGRVANGGPQKLAKGAKIDKAYLDGVEKFHWFDIRPAEDEVATQLESIKNSLEQTRHSFDLAFEEKRKKLTQGDELPAGVLKMVKVYLAVKRRLQPGDKMAGRHGNKGVVSKIVPVEDMPYMADGSTADIVLNPLGVPSRMNIGQVLEVHLGWAGKGLGQRIGDMLQQEARAAEIRTFMEEIYNSRGRKEDLTQLDDKEIVSMAQALTTGVPFATPVFDGASEQEIQDMLHLAYPEELAQRKGLTESRTQAYLYDGRTGDRFERPTTIGYMHYLKLHHLVDDKMHARSTGPYSLVTQQPLGGKAQFGGQRFGEMEVWALEAYGAAYVLQEMLTVKSDDVVGRTKVYESIVKGEHAIEAGMPESFNVLVKEIRSLGLDIELERS.

Belongs to the RNA polymerase beta chain family. In terms of assembly, the RNAP catalytic core consists of 2 alpha, 1 beta, 1 beta' and 1 omega subunit. When a sigma factor is associated with the core the holoenzyme is formed, which can initiate transcription.

It catalyses the reaction RNA(n) + a ribonucleoside 5'-triphosphate = RNA(n+1) + diphosphate. DNA-dependent RNA polymerase catalyzes the transcription of DNA into RNA using the four ribonucleoside triphosphates as substrates. In Delftia acidovorans (strain DSM 14801 / SPH-1), this protein is DNA-directed RNA polymerase subunit beta.